The primary structure comprises 90 residues: uncharacterized protein (90 aa).

The protein localises to the cytoplasm. This is an uncharacterized protein from Saccharomyces cerevisiae (strain ATCC 204508 / S288c) (Baker's yeast).